Here is a 206-residue protein sequence, read N- to C-terminus: Small ribosomal subunit protein uS4 (206 aa).

The S4 RNA-binding domain occupies methionine 98–asparagine 163.

The protein belongs to the universal ribosomal protein uS4 family. Part of the 30S ribosomal subunit. Contacts protein S5. The interaction surface between S4 and S5 is involved in control of translational fidelity.

Functionally, one of the primary rRNA binding proteins, it binds directly to 16S rRNA where it nucleates assembly of the body of the 30S subunit. In terms of biological role, with S5 and S12 plays an important role in translational accuracy. In Clostridium beijerinckii (strain ATCC 51743 / NCIMB 8052) (Clostridium acetobutylicum), this protein is Small ribosomal subunit protein uS4.